The chain runs to 208 residues: Small ribosomal subunit protein uS4 (208 aa).

In terms of domain architecture, S4 RNA-binding spans arginine 95–asparagine 157.

Belongs to the universal ribosomal protein uS4 family. Part of the 30S ribosomal subunit. Contacts protein S5. The interaction surface between S4 and S5 is involved in control of translational fidelity.

Functionally, one of the primary rRNA binding proteins, it binds directly to 16S rRNA where it nucleates assembly of the body of the 30S subunit. Its function is as follows. With S5 and S12 plays an important role in translational accuracy. The chain is Small ribosomal subunit protein uS4 from Borreliella burgdorferi (strain ATCC 35210 / DSM 4680 / CIP 102532 / B31) (Borrelia burgdorferi).